Consider the following 219-residue polypeptide: GTP-binding nuclear protein GSP1/CNR1 (219 aa).

N-acetylserine is present on S2. S2 bears the Phosphoserine mark. Residues 9-173 form the Small GTPase Ran-type domain; the sequence is EVPTFKLVLV…LWLARKLAGN (165 aa). 20–27 is a GTP binding site; sequence DGGTGKTT. Positions 39-47 are switch-I; the sequence is KKYIATIGV. GTP contacts are provided by residues G70, 124–127, and 152–154; these read NKVD and SAK. Positions 70–86 are switch-II; the sequence is GQEKFGGLRDGYYINAQ.

It belongs to the small GTPase superfamily. Ran family. As to quaternary structure, found in a nuclear export complex with RanGTP, exportin and pre-miRNA. Forms a complex with YRB1. Interacts with BUD5, CEX1, RRP12, SRM1, and DIS3/RRP44.

The protein resides in the nucleus. GTP-binding protein involved in nucleocytoplasmic transport. Required for the import of protein into the nucleus and also for RNA export. Essential for cell viability. By analogy with Ras, Ran may be activated when GTP is exchanged for bound GDP by RCC1 and inactivated when GTP is hydrolyzed by Ran upon activation by RanGAP1. In Saccharomyces cerevisiae (strain ATCC 204508 / S288c) (Baker's yeast), this protein is GTP-binding nuclear protein GSP1/CNR1 (GSP1).